The chain runs to 487 residues: 2-aminomuconic semialdehyde dehydrogenase (487 aa).

Residue 209–215 (GTGPRVG) coordinates NAD(+). Catalysis depends on glutamate 253, which acts as the Proton acceptor. Residue cysteine 287 is the Nucleophile of the active site. Serine 362 carries the post-translational modification Phosphoserine.

Belongs to the aldehyde dehydrogenase family. As to expression, highly expressed in adult kidney and liver. Detected at lower levels in fetal liver and kidney.

It is found in the cytoplasm. The enzyme catalyses 2-aminomuconate 6-semialdehyde + NAD(+) + H2O = (2Z,4E)-2-aminomuconate + NADH + 2 H(+). It participates in amino-acid degradation; L-kynurenine degradation. Functionally, catalyzes the NAD-dependent oxidation of 2-aminomuconic semialdehyde of the kynurenine metabolic pathway in L-tryptophan degradation. This is 2-aminomuconic semialdehyde dehydrogenase from Homo sapiens (Human).